Here is a 367-residue protein sequence, read N- to C-terminus: Putrescine/agmatine-binding protein (367 aa).

An N-terminal signal peptide occupies residues 1 to 19 (MKKVCALALSILTTIGATA).

Belongs to the bacterial solute-binding protein 1 family.

Its subcellular location is the periplasm. Its function is as follows. Binds putrescine and agmatine. This chain is Putrescine/agmatine-binding protein, found in Pseudomonas aeruginosa (strain ATCC 15692 / DSM 22644 / CIP 104116 / JCM 14847 / LMG 12228 / 1C / PRS 101 / PAO1).